A 304-amino-acid polypeptide reads, in one-letter code: Proteasome subunit beta (304 aa).

The propeptide at 1-65 is removed in mature form; by autocatalysis; that stretch reads MTWPHFEQLA…LTPTDAVPHG (65 aa). Thr-66 serves as the catalytic Nucleophile.

This sequence belongs to the peptidase T1B family. The 20S proteasome core is composed of 14 alpha and 14 beta subunits that assemble into four stacked heptameric rings, resulting in a barrel-shaped structure. The two inner rings, each composed of seven catalytic beta subunits, are sandwiched by two outer rings, each composed of seven alpha subunits. The catalytic chamber with the active sites is on the inside of the barrel. Has a gated structure, the ends of the cylinder being occluded by the N-termini of the alpha-subunits. Is capped by the proteasome-associated ATPase, ARC.

The protein localises to the cytoplasm. The catalysed reaction is Cleavage of peptide bonds with very broad specificity.. It functions in the pathway protein degradation; proteasomal Pup-dependent pathway. With respect to regulation, the formation of the proteasomal ATPase ARC-20S proteasome complex, likely via the docking of the C-termini of ARC into the intersubunit pockets in the alpha-rings, may trigger opening of the gate for substrate entry. Interconversion between the open-gate and close-gate conformations leads to a dynamic regulation of the 20S proteasome proteolysis activity. Its function is as follows. Component of the proteasome core, a large protease complex with broad specificity involved in protein degradation. This is Proteasome subunit beta from Mycobacterium sp. (strain JLS).